Consider the following 273-residue polypeptide: Dermonecrotic toxin LdSicTox-alphaIB3avi (273 aa).

The active site involves histidine 5. Positions 25 and 27 each coordinate Mg(2+). Histidine 41 serves as the catalytic Nucleophile. 2 disulfide bridges follow: cysteine 45–cysteine 51 and cysteine 47–cysteine 190. Position 85 (aspartate 85) interacts with Mg(2+).

It belongs to the arthropod phospholipase D family. Class II subfamily. It depends on Mg(2+) as a cofactor. Expressed by the venom gland.

The protein localises to the secreted. It catalyses the reaction an N-(acyl)-sphingosylphosphocholine = an N-(acyl)-sphingosyl-1,3-cyclic phosphate + choline. The catalysed reaction is an N-(acyl)-sphingosylphosphoethanolamine = an N-(acyl)-sphingosyl-1,3-cyclic phosphate + ethanolamine. It carries out the reaction a 1-acyl-sn-glycero-3-phosphocholine = a 1-acyl-sn-glycero-2,3-cyclic phosphate + choline. The enzyme catalyses a 1-acyl-sn-glycero-3-phosphoethanolamine = a 1-acyl-sn-glycero-2,3-cyclic phosphate + ethanolamine. Dermonecrotic toxins cleave the phosphodiester linkage between the phosphate and headgroup of certain phospholipids (sphingolipid and lysolipid substrates), forming an alcohol (often choline) and a cyclic phosphate. This toxin acts on sphingomyelin (SM). It may also act on ceramide phosphoethanolamine (CPE), lysophosphatidylcholine (LPC) and lysophosphatidylethanolamine (LPE), but not on lysophosphatidylserine (LPS), and lysophosphatidylglycerol (LPG). It acts by transphosphatidylation, releasing exclusively cyclic phosphate products as second products. Induces dermonecrosis, hemolysis, increased vascular permeability, edema, inflammatory response, and platelet aggregation. In Loxosceles deserta (Desert recluse spider), this protein is Dermonecrotic toxin LdSicTox-alphaIB3avi.